Here is a 120-residue protein sequence, read N- to C-terminus: Spermidine export protein MdtJ (120 aa).

The next 4 membrane-spanning stretches (helical) occupy residues 1-21 (MFYWILLALAIATEITGTLSM), 31-51 (AGFILMLVMITLSYIFLSFAV), 54-74 (IALGVAYALWEGIGILFITIF), and 81-101 (EALSTMKIAGLLTLVAGIVLI).

This sequence belongs to the drug/metabolite transporter (DMT) superfamily. Small multidrug resistance (SMR) (TC 2.A.7.1) family. MdtJ subfamily. In terms of assembly, forms a complex with MdtI.

It localises to the cell inner membrane. Catalyzes the excretion of spermidine. In Salmonella choleraesuis (strain SC-B67), this protein is Spermidine export protein MdtJ.